Here is a 260-residue protein sequence, read N- to C-terminus: Putative imidazole glycerol phosphate synthase subunit hisF3 (260 aa).

D135 is a catalytic residue.

The protein belongs to the HisA/HisF family. In terms of assembly, heterodimer of HisH and HisF.

Its subcellular location is the cytoplasm. It catalyses the reaction 5-[(5-phospho-1-deoxy-D-ribulos-1-ylimino)methylamino]-1-(5-phospho-beta-D-ribosyl)imidazole-4-carboxamide + L-glutamine = D-erythro-1-(imidazol-4-yl)glycerol 3-phosphate + 5-amino-1-(5-phospho-beta-D-ribosyl)imidazole-4-carboxamide + L-glutamate + H(+). It participates in amino-acid biosynthesis; L-histidine biosynthesis; L-histidine from 5-phospho-alpha-D-ribose 1-diphosphate: step 5/9. In terms of biological role, IGPS catalyzes the conversion of PRFAR and glutamine to IGP, AICAR and glutamate. The HisF subunit catalyzes the cyclization activity that produces IGP and AICAR from PRFAR using the ammonia provided by the HisH subunit. The polypeptide is Putative imidazole glycerol phosphate synthase subunit hisF3 (hisF3) (Vibrio vulnificus (strain YJ016)).